The chain runs to 274 residues: 2,3,4,5-tetrahydropyridine-2,6-dicarboxylate N-succinyltransferase (274 aa).

Substrate contacts are provided by Arg104 and Asp141.

It belongs to the transferase hexapeptide repeat family. Homotrimer.

Its subcellular location is the cytoplasm. The enzyme catalyses (S)-2,3,4,5-tetrahydrodipicolinate + succinyl-CoA + H2O = (S)-2-succinylamino-6-oxoheptanedioate + CoA. Its pathway is amino-acid biosynthesis; L-lysine biosynthesis via DAP pathway; LL-2,6-diaminopimelate from (S)-tetrahydrodipicolinate (succinylase route): step 1/3. In Yersinia enterocolitica serotype O:8 / biotype 1B (strain NCTC 13174 / 8081), this protein is 2,3,4,5-tetrahydropyridine-2,6-dicarboxylate N-succinyltransferase.